The chain runs to 65 residues: Large ribosomal subunit protein bL33c (65 aa).

This sequence belongs to the bacterial ribosomal protein bL33 family.

Its subcellular location is the plastid. It localises to the chloroplast. This is Large ribosomal subunit protein bL33c from Staurastrum punctulatum (Green alga).